Here is a 147-residue protein sequence, read N- to C-terminus: NADH-ubiquinone oxidoreductase chain 3 (147 aa).

The next 3 membrane-spanning stretches (helical) occupy residues Leu6–Ala26, Ala60–Leu80, and Thr84–Phe104.

Belongs to the complex I subunit 3 family.

Its subcellular location is the mitochondrion membrane. The catalysed reaction is a ubiquinone + NADH + 5 H(+)(in) = a ubiquinol + NAD(+) + 4 H(+)(out). In terms of biological role, core subunit of the mitochondrial membrane respiratory chain NADH dehydrogenase (Complex I) that is believed to belong to the minimal assembly required for catalysis. Complex I functions in the transfer of electrons from NADH to the respiratory chain. The immediate electron acceptor for the enzyme is believed to be ubiquinone. This Neurospora crassa (strain ATCC 24698 / 74-OR23-1A / CBS 708.71 / DSM 1257 / FGSC 987) protein is NADH-ubiquinone oxidoreductase chain 3 (ndh-3).